The following is a 205-amino-acid chain: Probable GTP-binding protein EngB (205 aa).

An EngB-type G domain is found at 29–203 (QGAEIAFIGR…KAVLSQWFSS (175 aa)). Residues 37–44 (GRSNAGKS), 64–68 (GRTQM), 82–85 (DLPG), 149–152 (TKSD), and 182–184 (FSS) each bind GTP. The Mg(2+) site is built by serine 44 and threonine 66.

Belongs to the TRAFAC class TrmE-Era-EngA-EngB-Septin-like GTPase superfamily. EngB GTPase family. The cofactor is Mg(2+).

Necessary for normal cell division and for the maintenance of normal septation. This is Probable GTP-binding protein EngB from Coxiella burnetii (strain CbuK_Q154) (Coxiella burnetii (strain Q154)).